We begin with the raw amino-acid sequence, 123 residues long: Large ribosomal subunit protein eL8 (123 aa).

This sequence belongs to the eukaryotic ribosomal protein eL8 family. In terms of assembly, part of the 50S ribosomal subunit. Probably part of the RNase P complex.

Its subcellular location is the cytoplasm. Multifunctional RNA-binding protein that recognizes the K-turn motif in ribosomal RNA, the RNA component of RNase P, box H/ACA, box C/D and box C'/D' sRNAs. This is Large ribosomal subunit protein eL8 from Methanosphaera stadtmanae (strain ATCC 43021 / DSM 3091 / JCM 11832 / MCB-3).